Here is a 326-residue protein sequence, read N- to C-terminus: NADH-ubiquinone oxidoreductase chain 1 (326 aa).

Helical transmembrane passes span 1-21 (MFLLSLLIKIITIILPLLVAV), 41-61 (PNIVGVFGLLQPLADGLKLFV), 72-92 (IIIFILAPILTFLLALVSWCV), 104-124 (INIGVLYILAISSLGVYGIIT), 152-172 (IGLILINVLLCSGSLNFTEIV), 177-197 (SIWFVIPLFPIFIMFYISILA), 234-256 (YANMILMCSLTTILFFGGWLPPF), 268-288 (VWFGLKTTFLLFGFIWIRSSF), and 303-323 (ILLPLSLAWVFLISGILLSFN).

It belongs to the complex I subunit 1 family.

Its subcellular location is the mitochondrion inner membrane. The catalysed reaction is a ubiquinone + NADH + 5 H(+)(in) = a ubiquinol + NAD(+) + 4 H(+)(out). Functionally, core subunit of the mitochondrial membrane respiratory chain NADH dehydrogenase (Complex I) that is believed to belong to the minimal assembly required for catalysis. Complex I functions in the transfer of electrons from NADH to the respiratory chain. The immediate electron acceptor for the enzyme is believed to be ubiquinone. This is NADH-ubiquinone oxidoreductase chain 1 (ND1) from Chondrus crispus (Carrageen Irish moss).